We begin with the raw amino-acid sequence, 98 residues long: uncharacterized protein (98 aa).

The next 2 membrane-spanning stretches (helical) occupy residues 2 to 22 (IVTL…GLWW) and 70 to 90 (AAKA…LPIL).

The protein localises to the cell membrane. This is an uncharacterized protein from Sinorhizobium fredii (strain NBRC 101917 / NGR234).